Consider the following 118-residue polypeptide: UPF0342 protein BpOF4_11360 (118 aa).

Belongs to the UPF0342 family.

This chain is UPF0342 protein BpOF4_11360, found in Alkalihalophilus pseudofirmus (strain ATCC BAA-2126 / JCM 17055 / OF4) (Bacillus pseudofirmus).